The primary structure comprises 230 residues: Protein GrpE (230 aa).

Disordered regions lie at residues 1-26 (MADE…DREA) and 209-230 (GVSK…EDNA). The segment covering 221-230 (NGASTSEDNA) has biased composition (polar residues).

The protein belongs to the GrpE family. Homodimer.

The protein localises to the cytoplasm. In terms of biological role, participates actively in the response to hyperosmotic and heat shock by preventing the aggregation of stress-denatured proteins, in association with DnaK and GrpE. It is the nucleotide exchange factor for DnaK and may function as a thermosensor. Unfolded proteins bind initially to DnaJ; upon interaction with the DnaJ-bound protein, DnaK hydrolyzes its bound ATP, resulting in the formation of a stable complex. GrpE releases ADP from DnaK; ATP binding to DnaK triggers the release of the substrate protein, thus completing the reaction cycle. Several rounds of ATP-dependent interactions between DnaJ, DnaK and GrpE are required for fully efficient folding. The chain is Protein GrpE from Brucella suis biovar 1 (strain 1330).